The chain runs to 56 residues: U4-myrmicitoxin-Tb1a (56 aa).

The signal sequence occupies residues 1–26; that stretch reads MQPSYLLLTFAIIFVMVIMYSPAVEA. The propeptide occupies 27-40; it reads KAGADADADAHADA. Residue glycine 53 is modified to Glycine amide.

Contains 1 disulfide bond. As to expression, expressed by the venom gland.

Its subcellular location is the secreted. Venom protein with unknown function. Does not induce paralysis when a high dose is administered by intrathoracic injection into the blowfly Lucilia caesar. In Tetramorium bicarinatum (Tramp ant), this protein is U4-myrmicitoxin-Tb1a.